Reading from the N-terminus, the 111-residue chain is Cytochrome c (111 aa).

Alanine 1 carries the post-translational modification N-acetylalanine. Residues cysteine 22, cysteine 25, and histidine 26 each contribute to the heme c site. Position 80 is an N6,N6,N6-trimethyllysine (lysine 80). Methionine 88 serves as a coordination point for heme c. Lysine 94 bears the N6,N6,N6-trimethyllysine mark.

The protein belongs to the cytochrome c family. Binds 1 heme c group covalently per subunit.

It is found in the mitochondrion intermembrane space. In terms of biological role, electron carrier protein. The oxidized form of the cytochrome c heme group can accept an electron from the heme group of the cytochrome c1 subunit of cytochrome reductase. Cytochrome c then transfers this electron to the cytochrome oxidase complex, the final protein carrier in the mitochondrial electron-transport chain. The protein is Cytochrome c of Cucurbita maxima (Pumpkin).